The following is a 128-amino-acid chain: Large ribosomal subunit protein bL17 (128 aa).

It belongs to the bacterial ribosomal protein bL17 family. Part of the 50S ribosomal subunit. Contacts protein L32.

The protein is Large ribosomal subunit protein bL17 of Haemophilus influenzae (strain 86-028NP).